The following is a 339-amino-acid chain: DNA-directed RNA polymerase subunit alpha (339 aa).

The segment at 1–238 (MVDPIVTKNW…EQLSIFINFD (238 aa)) is alpha N-terminal domain (alpha-NTD). The interval 250 to 339 (VEEQKLNENL…KAAPQGAPKV (90 aa)) is alpha C-terminal domain (alpha-CTD).

Belongs to the RNA polymerase alpha chain family. Homodimer. The RNAP catalytic core consists of 2 alpha, 1 beta, 1 beta' and 1 omega subunit. When a sigma factor is associated with the core the holoenzyme is formed, which can initiate transcription.

It carries out the reaction RNA(n) + a ribonucleoside 5'-triphosphate = RNA(n+1) + diphosphate. In terms of biological role, DNA-dependent RNA polymerase catalyzes the transcription of DNA into RNA using the four ribonucleoside triphosphates as substrates. This chain is DNA-directed RNA polymerase subunit alpha, found in Anaeromyxobacter dehalogenans (strain 2CP-C).